A 208-amino-acid polypeptide reads, in one-letter code: MARYIGPSCKLARREGADLSLKSPSRALDSKCKLEQRPGQHGAVRKSKLSDYASQLREKQKVKRIYGVLERQFRNYYKNASTKKGNTGENLLQLLETRLDNVIYRMGFAVTRPAARQLVSHRRVLVNGKLVNLPSYHVKPGDVVALSQRAQKYLCVQESLTIKDQHGSAFSWVEVDSEKFSGVFKAFPDRADLPSDINEALIVELYSK.

The region spanning 97 to 158 (TRLDNVIYRM…RAQKYLCVQE (62 aa)) is the S4 RNA-binding domain.

It belongs to the universal ribosomal protein uS4 family. Part of the 30S ribosomal subunit. Contacts protein S5. The interaction surface between S4 and S5 is involved in control of translational fidelity.

One of the primary rRNA binding proteins, it binds directly to 16S rRNA where it nucleates assembly of the body of the 30S subunit. Its function is as follows. With S5 and S12 plays an important role in translational accuracy. In Xylella fastidiosa (strain 9a5c), this protein is Small ribosomal subunit protein uS4.